The sequence spans 364 residues: Nuclear hormone receptor family member nhr-53 (364 aa).

Residues 20-95 (PSYCLICCEV…VGMQRSSVQQ (76 aa)) constitute a DNA-binding region (nuclear receptor). 2 consecutive NR C4-type zinc fingers follow at residues 23 to 43 (CLIC…CRAC) and 59 to 83 (CPKN…YEKC). The 254-residue stretch at 110–363 (REEPVLDTMR…KNLYDMFSPT (254 aa)) folds into the NR LBD domain.

Belongs to the nuclear hormone receptor family.

The protein localises to the nucleus. Functionally, orphan nuclear receptor. The chain is Nuclear hormone receptor family member nhr-53 (nhr-53) from Caenorhabditis elegans.